A 594-amino-acid polypeptide reads, in one-letter code: Arrestin domain-containing protein C584.15c (594 aa).

Over residues 368–398 (NPQLQSGFTTPNLSRRNSSDFGPNSPVNIHS) the composition is skewed to polar residues. Disordered stretches follow at residues 368–417 (NPQL…NSNA) and 531–594 (EATR…RGVR). A compositionally biased stretch (low complexity) spans 404–417 (SGQQPSSPASNSNA). The span at 534-552 (RPSSPTESVEIPSNTTTIA) shows a compositional bias: polar residues. Pro residues predominate over residues 565 to 574 (PSTPAPPLPS). Ser584 carries the phosphoserine modification.

This sequence belongs to the arrestin family.

The polypeptide is Arrestin domain-containing protein C584.15c (Schizosaccharomyces pombe (strain 972 / ATCC 24843) (Fission yeast)).